The primary structure comprises 471 residues: UDP-N-acetylmuramate--L-alanine ligase (471 aa).

An ATP-binding site is contributed by 114–120 (GTHGKTT).

It belongs to the MurCDEF family.

Its subcellular location is the cytoplasm. It catalyses the reaction UDP-N-acetyl-alpha-D-muramate + L-alanine + ATP = UDP-N-acetyl-alpha-D-muramoyl-L-alanine + ADP + phosphate + H(+). It participates in cell wall biogenesis; peptidoglycan biosynthesis. Cell wall formation. The polypeptide is UDP-N-acetylmuramate--L-alanine ligase (Allorhizobium ampelinum (strain ATCC BAA-846 / DSM 112012 / S4) (Agrobacterium vitis (strain S4))).